Here is a 152-residue protein sequence, read N- to C-terminus: Gamma-glutamylaminecyclotransferase C (152 aa).

Residue 9–12 (YGSL) coordinates substrate. Residue glutamate 84 is the Proton acceptor of the active site.

The protein belongs to the gamma-glutamylcyclotransferase family.

It carries out the reaction epsilon-(gamma-L-glutamyl)-L-lysine = 5-oxo-L-proline + L-lysine. Its function is as follows. May contribute to degradation of proteins cross-linked by transglutaminases by degrading the cross-link between a lysine and a glutamic acid residue. Catalyzes the formation of 5-oxo-L-proline from L-gamma-glutamyl-L-epsilon-lysine. The protein is Gamma-glutamylaminecyclotransferase C (ggact.3) of Danio rerio (Zebrafish).